The primary structure comprises 272 residues: Elongation factor Ts (272 aa).

The interval 76–79 is involved in Mg(2+) ion dislocation from EF-Tu; the sequence is TDFV.

This sequence belongs to the EF-Ts family.

The protein resides in the cytoplasm. In terms of biological role, associates with the EF-Tu.GDP complex and induces the exchange of GDP to GTP. It remains bound to the aminoacyl-tRNA.EF-Tu.GTP complex up to the GTP hydrolysis stage on the ribosome. This chain is Elongation factor Ts, found in Corynebacterium jeikeium (strain K411).